Consider the following 562-residue polypeptide: NAD-dependent malic enzyme (562 aa).

Tyr101 functions as the Proton donor in the catalytic mechanism. An NAD(+)-binding site is contributed by Arg154. Catalysis depends on Lys172, which acts as the Proton acceptor. A divalent metal cation contacts are provided by Glu243, Asp244, and Asp267. Residues Asp267 and Asn415 each coordinate NAD(+).

The protein belongs to the malic enzymes family. In terms of assembly, homotetramer. The cofactor is Mg(2+). It depends on Mn(2+) as a cofactor.

The enzyme catalyses (S)-malate + NAD(+) = pyruvate + CO2 + NADH. The catalysed reaction is oxaloacetate + H(+) = pyruvate + CO2. In Shewanella pealeana (strain ATCC 700345 / ANG-SQ1), this protein is NAD-dependent malic enzyme.